Consider the following 329-residue polypeptide: UDP-2,3-diacylglucosamine pyrophosphatase LpxG (329 aa).

The helical transmembrane segment at 2–24 (FVFVGSTVSLTAIVAAPVLTWIW) threads the bilayer. A divalent metal cation is bound by residues D59, H61, D91, N123, H257, and H259.

This sequence belongs to the metallophosphoesterase superfamily. The cofactor is Mn(2+).

It is found in the cell inner membrane. It carries out the reaction UDP-2,3-diacyl-alpha-D-glucosamine + H2O = 2,3-diacyl-alpha-D-glucosaminyl 1-phosphate + UMP + 2 H(+). It participates in glycolipid biosynthesis; lipid IV(A) biosynthesis. Its function is as follows. Hydrolyzes the pyrophosphate bond of UDP-2,3-diacylglucosamine to form 2,3-diacylglucosamine 1-phosphate (lipid X) and UMP by catalyzing the attack of water at the alpha-P atom. Involved in the biosynthesis of lipid A, a phosphorylated glycolipid that anchors the lipooligosaccharide (LOS) to the outer membrane of the cell. The protein is UDP-2,3-diacylglucosamine pyrophosphatase LpxG of Chlamydia muridarum (strain MoPn / Nigg).